A 212-amino-acid polypeptide reads, in one-letter code: Transcription antitermination protein NusB (212 aa).

Disordered stretches follow at residues 1–34 (MSDEQSTPASGRPPRQSRGGLTSTGARKAASKSN) and 169–212 (EHDR…QAAG). Low complexity predominate over residues 178–212 (APAQPAAKADTATDAVADAATDAAAADDAADQAAG).

It belongs to the NusB family.

In terms of biological role, involved in transcription antitermination. Required for transcription of ribosomal RNA (rRNA) genes. Binds specifically to the boxA antiterminator sequence of the ribosomal RNA (rrn) operons. In Delftia acidovorans (strain DSM 14801 / SPH-1), this protein is Transcription antitermination protein NusB.